Here is an 82-residue protein sequence, read N- to C-terminus: UPF0213 protein SSP2268 (82 aa).

A GIY-YIG domain is found at 2-77 (DKHYIYIVKC…KTFSRQKKLK (76 aa)).

Belongs to the UPF0213 family.

The sequence is that of UPF0213 protein SSP2268 from Staphylococcus saprophyticus subsp. saprophyticus (strain ATCC 15305 / DSM 20229 / NCIMB 8711 / NCTC 7292 / S-41).